Consider the following 79-residue polypeptide: Small ribosomal subunit protein bS18 (79 aa).

This sequence belongs to the bacterial ribosomal protein bS18 family. Part of the 30S ribosomal subunit. Forms a tight heterodimer with protein bS6.

Its function is as follows. Binds as a heterodimer with protein bS6 to the central domain of the 16S rRNA, where it helps stabilize the platform of the 30S subunit. This Rhodopseudomonas palustris (strain HaA2) protein is Small ribosomal subunit protein bS18.